The sequence spans 561 residues: Putative transport protein YbjL (561 aa).

A run of 5 helical transmembrane segments spans residues 8-28, 32-52, 66-86, 94-114, and 158-178; these read LLNG…LCLG, LGSV…LLGQ, FMLF…SIFF, MLAL…GKLF, and NLSL…IVGA. 2 consecutive RCK C-terminal domains span residues 200-288 and 292-373; these read RGLD…SFRN and VFDR…RIGF. A run of 5 helical transmembrane segments spans residues 383–403, 406–426, 447–467, 475–495, and 540–560; these read LLAF…TFQF, FSFG…LGFL, FGLM…ISNG, MLIA…LFGA, and AIAN…WPGL.

It belongs to the AAE transporter (TC 2.A.81) family. YbjL subfamily.

The protein resides in the cell membrane. The polypeptide is Putative transport protein YbjL (Salmonella typhi).